A 347-amino-acid chain; its full sequence is Dihydroorotase (347 aa).

Residues His-17 and His-19 each contribute to the Zn(2+) site. Residues 19–21 and Asn-45 contribute to the substrate site; that span reads HVR. Residues Lys-102, His-139, and His-177 each contribute to the Zn(2+) site. Residue Lys-102 is modified to N6-carboxylysine. His-139 is a substrate binding site. Leu-222 contributes to the substrate binding site. Asp-250 contacts Zn(2+). Residue Asp-250 is part of the active site. 2 residues coordinate substrate: His-254 and Ala-266.

The protein belongs to the metallo-dependent hydrolases superfamily. DHOase family. Class II DHOase subfamily. In terms of assembly, homodimer. Zn(2+) serves as cofactor.

It carries out the reaction (S)-dihydroorotate + H2O = N-carbamoyl-L-aspartate + H(+). It functions in the pathway pyrimidine metabolism; UMP biosynthesis via de novo pathway; (S)-dihydroorotate from bicarbonate: step 3/3. In terms of biological role, catalyzes the reversible cyclization of carbamoyl aspartate to dihydroorotate. The sequence is that of Dihydroorotase from Acidovorax sp. (strain JS42).